Reading from the N-terminus, the 176-residue chain is Probable DNA-directed RNA polymerase subunit delta (176 aa).

One can recognise an HTH HARE-type domain in the interval 14-81 (KSFIDMAYTL…GENLWGLRDW (68 aa)). Residues 114–176 (LGEDEMDDDD…VFEDEEDFND (63 aa)) form a disordered region. Acidic residues-rich tracts occupy residues 116 to 145 (EDEM…QVEE) and 153 to 176 (VIEE…DFND).

The protein belongs to the RpoE family. As to quaternary structure, RNAP is composed of a core of 2 alpha, a beta and a beta' subunits. The core is associated with a delta subunit and one of several sigma factors.

Its function is as follows. Participates in both the initiation and recycling phases of transcription. In the presence of the delta subunit, RNAP displays an increased specificity of transcription, a decreased affinity for nucleic acids, and an increased efficiency of RNA synthesis because of enhanced recycling. The polypeptide is Probable DNA-directed RNA polymerase subunit delta (Staphylococcus aureus (strain JH1)).